The primary structure comprises 202 residues: Small ribosomal subunit protein uS5 (202 aa).

Residues 1–13 (MPGQQRRGGGSGG) are compositionally biased toward gly residues. Positions 1 to 31 (MPGQQRRGGGSGGSDRRERRDRSGSGPAQEK) are disordered. Positions 14 to 23 (SDRRERRDRS) are enriched in basic and acidic residues. In terms of domain architecture, S5 DRBM spans 34-97 (YVERVVAINR…EEAKKHFFKV (64 aa)).

This sequence belongs to the universal ribosomal protein uS5 family. In terms of assembly, part of the 30S ribosomal subunit. Contacts proteins S4 and S8.

Its function is as follows. With S4 and S12 plays an important role in translational accuracy. Functionally, located at the back of the 30S subunit body where it stabilizes the conformation of the head with respect to the body. This is Small ribosomal subunit protein uS5 from Frankia casuarinae (strain DSM 45818 / CECT 9043 / HFP020203 / CcI3).